The sequence spans 473 residues: MTKEDWEAVIGLEVHAQVSSNTKLFSSSSTEFGAEHNTQVSLVDAAMPGTLPILNYYCIEQAIRTGLALSAEINKYSYFDRKNYFYPDLPQGYQITQFFEPIVKNGRVFINDNEKEIRIARIHLEQDAGKSVHEESKTYVDLNRAGVALIEIVSEPDLRSSAEAAECMKKLRQILRYTGSCDGDMEKGSLRCDANVSVRLKGSNTFGTRCEIKNLNSIRHIVQAIDYEIQRQIEILESGEEISQDTLLFDVASGKTKVMRSKEDASDYRYFPEPDLLPVEVSQEKIDLIQSSLPELPDQKKLRYIEELGINEYDANVITSDKAIADYFEELIKKHDSKLAVTWLTVELFGRLNKANIDIVSSPIKANALSELLDFIVDGTISAKLGKQVFDIMFETGKPASLIIEEQDLKQITDKCQISEVIDKIINSNQDKVQEYKSGKTRLYGFFVGEVMKLTKGKASPDVVNSILSERLG.

The protein belongs to the GatB/GatE family. GatB subfamily. Heterotrimer of A, B and C subunits.

It carries out the reaction L-glutamyl-tRNA(Gln) + L-glutamine + ATP + H2O = L-glutaminyl-tRNA(Gln) + L-glutamate + ADP + phosphate + H(+). The catalysed reaction is L-aspartyl-tRNA(Asn) + L-glutamine + ATP + H2O = L-asparaginyl-tRNA(Asn) + L-glutamate + ADP + phosphate + 2 H(+). In terms of biological role, allows the formation of correctly charged Asn-tRNA(Asn) or Gln-tRNA(Gln) through the transamidation of misacylated Asp-tRNA(Asn) or Glu-tRNA(Gln) in organisms which lack either or both of asparaginyl-tRNA or glutaminyl-tRNA synthetases. The reaction takes place in the presence of glutamine and ATP through an activated phospho-Asp-tRNA(Asn) or phospho-Glu-tRNA(Gln). The sequence is that of Aspartyl/glutamyl-tRNA(Asn/Gln) amidotransferase subunit B from Wolbachia sp. subsp. Drosophila simulans (strain wRi).